The primary structure comprises 231 residues: Ureidoacrylate amidohydrolase RutB (231 aa).

The active-site Proton acceptor is the Asp-25. Residue Lys-134 is part of the active site. Catalysis depends on Cys-167, which acts as the Nucleophile.

The protein belongs to the isochorismatase family. RutB subfamily.

It catalyses the reaction (Z)-3-ureidoacrylate + H2O + H(+) = (Z)-3-aminoacrylate + NH4(+) + CO2. The enzyme catalyses (Z)-3-ureidoacrylate + H2O = (Z)-3-aminoacrylate + carbamate + H(+). The catalysed reaction is (Z)-2-methylureidoacrylate + H2O + H(+) = (Z)-2-methylaminoacrylate + NH4(+) + CO2. Its function is as follows. Hydrolyzes ureidoacrylate to form aminoacrylate and carbamate. The carbamate hydrolyzes spontaneously, thereby releasing one of the nitrogen atoms of the pyrimidine ring as ammonia and one of its carbon atoms as CO2. The polypeptide is Ureidoacrylate amidohydrolase RutB (Escherichia coli O139:H28 (strain E24377A / ETEC)).